Reading from the N-terminus, the 207-residue chain is UPF0328 protein ECU02_1590/ECU04_0060/ECU08_2120 (207 aa).

Disordered stretches follow at residues 1–154 and 180–207; these read MPRP…HSHT and GRLHGSPTKGAQTAQQAQPHPPKQLATL. Basic and acidic residues-rich tracts occupy residues 14-24 and 75-97; these read DHPDFRSESSA and HTEGCHTHEANPEPNTKHTETES. Composition is skewed to polar residues over residues 98–121 and 133–149; these read PKPQTSTQHHTPITIPSSLLSQNT and SRPSTIPANTYQPQSPH.

This sequence belongs to the UPF0328 family.

The polypeptide is UPF0328 protein ECU02_1590/ECU04_0060/ECU08_2120 (Encephalitozoon cuniculi (strain GB-M1) (Microsporidian parasite)).